The primary structure comprises 723 residues: Hypoxia-inducible factor prolyl hydroxylase (723 aa).

Zn(2+)-binding residues include C39, C42, C54, C57, C63, H67, H75, and C79. Residues C39 to C79 form an MYND-type; atypical zinc finger. Residues P249–S270 are compositionally biased toward low complexity. Disordered regions lie at residues P249–T275 and I294–Y323. One can recognise a Fe2OG dioxygenase domain in the interval G468–D566. The Fe cation site is built by H487, D489, and H548. A 2-oxoglutarate-binding site is contributed by R557. The segment at R678–I723 is disordered. The segment covering D687–S699 has biased composition (basic and acidic residues).

In terms of assembly, interacts (via catalytic domain) with lin-10 (via N-terminus); the interaction regulates lin-10 subcellular localization; the interaction is direct. Interacts (via catalytic domain) with swan-1 (via WD 1-3 repeats); the interaction may regulate vhl-1-independent hif-1 transcriptional activity; the interaction is direct. Interacts (via C-terminus) with cysl-1; the interaction is enhanced by hydrogen disulfide and activates hif-1-mediated transcription; the interaction is direct. Requires Fe(2+) as cofactor. It depends on L-ascorbate as a cofactor. In larvae and adults, expressed in pharyngeal and body wall muscles.

It localises to the cytoplasm. Its subcellular location is the nucleus. The protein localises to the cell projection. It is found in the dendrite. The protein resides in the axon. It catalyses the reaction L-prolyl-[hypoxia-inducible factor alpha subunit] + 2-oxoglutarate + O2 = trans-4-hydroxy-L-prolyl-[hypoxia-inducible factor alpha subunit] + succinate + CO2. With respect to regulation, inhibited by Co(2+) and dimethyloxalylglycine. Inhibited by the iron chelator 2, 2'-dipyridyl. Its function is as follows. Cellular oxygen sensor which regulates the stability and the activity of hypoxia-inducible transcription factor, hif-1. In normoxic conditions, hydroxylates hif-1 targeting it for vhl-1-mediated proteasomal degradation. In addition, regulates hif-1 transcriptional activity in a vhl-1-independent manner and independently of its hydroxylase activity. By regulating hif-1 activity, controls several cellular responses. Mediates susceptibility to B.thuringiensis and V.cholerae pore-forming toxins and enteropathogenic E.coli. Mediates susceptibility to P.aeruginosa PAO1-mediated killing by regulating resistance to cyanide produced by P.aeruginosa. Mediates resistance to S.aureus-mediated killing. In addition, plays a role in heat acclimation, neuronal development, behavioral responses to reoxygenation and hydrogen sulfide, iron homeostasis and aging. In neurons, involved in mitochondrion fusion during reoxygenation. Involved in egg laying. Regulates the trafficking of the glutamate receptor glr-1, probably independently of hif-1, by regulating lin-10 subcellular localization in response to oxygen levels. May hydroxylate lin-10. The protein is Hypoxia-inducible factor prolyl hydroxylase of Caenorhabditis elegans.